The chain runs to 137 residues: Profilin-3 (137 aa).

The protein belongs to the profilin family. As to quaternary structure, interacts with ACTRT3. In terms of tissue distribution, testis specific.

It localises to the cytoplasm. The protein resides in the cytoskeleton. The protein localises to the nucleus. Functionally, binds to actin and affects the structure of the cytoskeleton. Slightly reduces actin polymerization. Binds to poly-L-proline, phosphatidylinositol 3-phosphate (PtdIns(3)P), phosphatidylinositol 4,5-bisphosphate (PtdIns(4,5)P2) and phosphatidylinositol 4-phosphate (PtdIns(4)P). May be involved in spermatogenesis. The sequence is that of Profilin-3 (PFN3) from Homo sapiens (Human).